The following is a 395-amino-acid chain: Phosphoglycerate kinase (395 aa).

Residues 20–22 (DLN), arginine 35, 58–61 (HFGR), arginine 117, and arginine 150 contribute to the substrate site. ATP is bound by residues lysine 200, glutamate 322, and 352-355 (GGDT).

The protein belongs to the phosphoglycerate kinase family. Monomer.

The protein resides in the cytoplasm. The enzyme catalyses (2R)-3-phosphoglycerate + ATP = (2R)-3-phospho-glyceroyl phosphate + ADP. The protein operates within carbohydrate degradation; glycolysis; pyruvate from D-glyceraldehyde 3-phosphate: step 2/5. The chain is Phosphoglycerate kinase from Brucella suis biovar 1 (strain 1330).